Consider the following 341-residue polypeptide: S-adenosylmethionine:tRNA ribosyltransferase-isomerase (341 aa).

The protein belongs to the QueA family. Monomer.

The protein resides in the cytoplasm. It carries out the reaction 7-aminomethyl-7-carbaguanosine(34) in tRNA + S-adenosyl-L-methionine = epoxyqueuosine(34) in tRNA + adenine + L-methionine + 2 H(+). It functions in the pathway tRNA modification; tRNA-queuosine biosynthesis. Transfers and isomerizes the ribose moiety from AdoMet to the 7-aminomethyl group of 7-deazaguanine (preQ1-tRNA) to give epoxyqueuosine (oQ-tRNA). The polypeptide is S-adenosylmethionine:tRNA ribosyltransferase-isomerase (Caldanaerobacter subterraneus subsp. tengcongensis (strain DSM 15242 / JCM 11007 / NBRC 100824 / MB4) (Thermoanaerobacter tengcongensis)).